The sequence spans 102 residues: MAKGQSLQDPFLNALRRERVPVSIYLVNGIKLQGQIESFDQFVILLKNTVSQMVYKHAISTVVPSRPVSHHSNNAGGGTSSNYHHGSSPQNTSAQQDSEETE.

Positions 9–68 constitute a Sm domain; the sequence is DPFLNALRRERVPVSIYLVNGIKLQGQIESFDQFVILLKNTVSQMVYKHAISTVVPSRPV. The disordered stretch occupies residues 63–102; the sequence is VPSRPVSHHSNNAGGGTSSNYHHGSSPQNTSAQQDSEETE. Residues 70-96 are compositionally biased toward polar residues; it reads HHSNNAGGGTSSNYHHGSSPQNTSAQQ.

Belongs to the Hfq family. As to quaternary structure, homohexamer.

In terms of biological role, RNA chaperone that binds small regulatory RNA (sRNAs) and mRNAs to facilitate mRNA translational regulation in response to envelope stress, environmental stress and changes in metabolite concentrations. Also binds with high specificity to tRNAs. This Shigella dysenteriae serotype 1 (strain Sd197) protein is RNA-binding protein Hfq.